Here is a 357-residue protein sequence, read N- to C-terminus: Cyclic AMP-responsive element-binding protein 5 (357 aa).

A disordered region spans residues 114 to 239; that stretch reads RQDQTPHHHL…FLERNRAAAT (126 aa). Composition is skewed to basic residues over residues 120–129 and 138–175; these read HHHLHSHPHQ and PYPHQHQHPAHHPHPQPHHQQNHPHHHSHSHLHAHPAH. Over residues 186–195 the composition is skewed to polar residues; that stretch reads TGNQAQVSPA. Positions 196-206 are enriched in low complexity; it reads TQQMQPTQTIQ. Positions 218 to 235 are enriched in basic and acidic residues; that stretch reads VVDEDPDERRRKFLERNR. The bZIP domain occupies 224-287; sequence DERRRKFLER…AQLKQLLLTH (64 aa). Residues 226–246 form a basic motif region; the sequence is RRRKFLERNRAAATRCRQKRK. Residues 252–280 are leucine-zipper; that stretch reads LEKKAEELTQTNMQLQNEVSMLKNEVAQL. The disordered stretch occupies residues 298-318; sequence ESQGYLSPESSPPASPVPACS.

Belongs to the bZIP family. In terms of assembly, binds DNA as a homodimer or as a heterodimer with JUN or ATF2/CREBP1.

It localises to the nucleus. In terms of biological role, binds to the cAMP response element and activates transcription. The chain is Cyclic AMP-responsive element-binding protein 5 (Creb5) from Mus musculus (Mouse).